A 142-amino-acid chain; its full sequence is Holo-[acyl-carrier-protein] synthase (142 aa).

D9 and E63 together coordinate Mg(2+).

Belongs to the P-Pant transferase superfamily. AcpS family. The cofactor is Mg(2+).

Its subcellular location is the cytoplasm. The enzyme catalyses apo-[ACP] + CoA = holo-[ACP] + adenosine 3',5'-bisphosphate + H(+). In terms of biological role, transfers the 4'-phosphopantetheine moiety from coenzyme A to a Ser of acyl-carrier-protein. The protein is Holo-[acyl-carrier-protein] synthase of Burkholderia lata (strain ATCC 17760 / DSM 23089 / LMG 22485 / NCIMB 9086 / R18194 / 383).